Consider the following 412-residue polypeptide: Tyrosine--tRNA ligase (412 aa).

An L-tyrosine-binding site is contributed by Y41. A 'HIGH' region motif is present at residues 46 to 55 (ATADSLHVGH). The L-tyrosine site is built by Y174 and Q178. The short motif at 234–238 (KMGKS) is the 'KMSKS' region element. K237 contributes to the ATP binding site. Residues 348 to 411 (LSLTDLLLEH…KKQHLHLRLE (64 aa)) enclose the S4 RNA-binding domain.

Belongs to the class-I aminoacyl-tRNA synthetase family. TyrS type 1 subfamily. In terms of assembly, homodimer.

Its subcellular location is the cytoplasm. The enzyme catalyses tRNA(Tyr) + L-tyrosine + ATP = L-tyrosyl-tRNA(Tyr) + AMP + diphosphate + H(+). Catalyzes the attachment of tyrosine to tRNA(Tyr) in a two-step reaction: tyrosine is first activated by ATP to form Tyr-AMP and then transferred to the acceptor end of tRNA(Tyr). In Pseudomonas aeruginosa (strain LESB58), this protein is Tyrosine--tRNA ligase.